Consider the following 92-residue polypeptide: Small ribosomal subunit protein uS19 (92 aa).

This sequence belongs to the universal ribosomal protein uS19 family.

Protein S19 forms a complex with S13 that binds strongly to the 16S ribosomal RNA. This Legionella pneumophila (strain Paris) protein is Small ribosomal subunit protein uS19.